The primary structure comprises 106 residues: ATP synthase-coupling factor 6, mitochondrial (106 aa).

This sequence belongs to the eukaryotic ATPase subunit F6 family. As to quaternary structure, F-type ATPases have 2 components, CF(1) - the catalytic core - and CF(0) - the membrane proton channel. CF(0) seems to have nine subunits: a, b, c, d, e, f, g, F6 and 8 (or A6L).

Its subcellular location is the mitochondrion. The protein resides in the mitochondrion inner membrane. Functionally, mitochondrial membrane ATP synthase (F(1)F(0) ATP synthase or Complex V) produces ATP from ADP in the presence of a proton gradient across the membrane which is generated by electron transport complexes of the respiratory chain. F-type ATPases consist of two structural domains, F(1) - containing the extramembraneous catalytic core and F(0) - containing the membrane proton channel, linked together by a central stalk and a peripheral stalk. During catalysis, ATP synthesis in the catalytic domain of F(1) is coupled via a rotary mechanism of the central stalk subunits to proton translocation. Part of the complex F(0) domain and the peripheric stalk, which acts as a stator to hold the catalytic alpha(3)beta(3) subcomplex and subunit a/ATP6 static relative to the rotary elements. This Drosophila melanogaster (Fruit fly) protein is ATP synthase-coupling factor 6, mitochondrial.